The sequence spans 274 residues: NH(3)-dependent NAD(+) synthetase (274 aa).

Residue 46–53 coordinates ATP; that stretch reads GISGGQDS. D52 provides a ligand contact to Mg(2+). R140 contributes to the deamido-NAD(+) binding site. ATP is bound at residue T160. Residue E165 coordinates Mg(2+). Residues K173 and D180 each coordinate deamido-NAD(+). K189 and T211 together coordinate ATP. Deamido-NAD(+) is bound at residue 260-261; the sequence is HK.

The protein belongs to the NAD synthetase family. In terms of assembly, homodimer.

The enzyme catalyses deamido-NAD(+) + NH4(+) + ATP = AMP + diphosphate + NAD(+) + H(+). It functions in the pathway cofactor biosynthesis; NAD(+) biosynthesis; NAD(+) from deamido-NAD(+) (ammonia route): step 1/1. Catalyzes the ATP-dependent amidation of deamido-NAD to form NAD. Uses ammonia as a nitrogen source. The protein is NH(3)-dependent NAD(+) synthetase of Streptococcus equi subsp. zooepidemicus (strain H70).